The following is a 105-amino-acid chain: uncharacterized protein (105 aa).

Residues 4 to 26 form a helical membrane-spanning segment; the sequence is TQILLILFVGILVTTPHDIFIII.

The protein localises to the membrane. This is an uncharacterized protein from Rickettsia conorii (strain ATCC VR-613 / Malish 7).